We begin with the raw amino-acid sequence, 118 residues long: Ribosome-binding factor A (118 aa).

This sequence belongs to the RbfA family. Monomer. Binds 30S ribosomal subunits, but not 50S ribosomal subunits or 70S ribosomes.

The protein localises to the cytoplasm. In terms of biological role, one of several proteins that assist in the late maturation steps of the functional core of the 30S ribosomal subunit. Associates with free 30S ribosomal subunits (but not with 30S subunits that are part of 70S ribosomes or polysomes). Required for efficient processing of 16S rRNA. May interact with the 5'-terminal helix region of 16S rRNA. The protein is Ribosome-binding factor A of Geobacter metallireducens (strain ATCC 53774 / DSM 7210 / GS-15).